Consider the following 351-residue polypeptide: Ribonucleoside-diphosphate reductase subunit beta (351 aa).

Asp-94, Glu-124, and His-127 together coordinate Fe cation. The active site involves Tyr-131. Residues Glu-191, Glu-225, and His-228 each contribute to the Fe cation site.

The protein belongs to the ribonucleoside diphosphate reductase small chain family. In terms of assembly, tetramer of two alpha and two beta subunits. Fe cation serves as cofactor.

The enzyme catalyses a 2'-deoxyribonucleoside 5'-diphosphate + [thioredoxin]-disulfide + H2O = a ribonucleoside 5'-diphosphate + [thioredoxin]-dithiol. In terms of biological role, provides the precursors necessary for DNA synthesis. Catalyzes the biosynthesis of deoxyribonucleotides from the corresponding ribonucleotides. This Treponema pallidum (strain Nichols) protein is Ribonucleoside-diphosphate reductase subunit beta (nrdB).